The sequence spans 470 residues: Uronate isomerase (470 aa).

It belongs to the metallo-dependent hydrolases superfamily. Uronate isomerase family.

The catalysed reaction is D-glucuronate = D-fructuronate. The enzyme catalyses aldehydo-D-galacturonate = keto-D-tagaturonate. The protein operates within carbohydrate metabolism; pentose and glucuronate interconversion. The sequence is that of Uronate isomerase from Cronobacter sakazakii (strain ATCC BAA-894) (Enterobacter sakazakii).